We begin with the raw amino-acid sequence, 664 residues long: Intraflagellar transport protein 70B (664 aa).

TPR repeat units follow at residues 11–44 (DGEF…SPRS), 45–78 (RAGL…HPEL), 153–186 (LDGQ…SGYR), 188–220 (DLSY…GIRQ), 385–418 (LTEQ…YEDT), 423–456 (IPVL…CNDH), and 458–491 (VWKL…HYDN). Positions 509 to 532 (MISQNEEAEELMRKIGKEEEQLSY) form a coiled coil. The TPR 8 repeat unit spans residues 543 to 576 (CIVNLVIGTLYCAKGNYDFGISRVIKSLEPCNKK).

Belongs to the TTC30/dfy-1/fleer family. In terms of assembly, interacts with the IFT B complex components IFT27, IFT46, IFT74, IFT52, IFT57, IFT80, IFT81 and IFT88. Interacts with KIF17.

It is found in the cell projection. Its subcellular location is the cilium. Its function is as follows. Required for polyglutamylation of axonemal tubulin. Plays a role in anterograde intraflagellar transport (IFT), the process by which cilia precursors are transported from the base of the cilium to the site of their incorporation at the tip. The sequence is that of Intraflagellar transport protein 70B (IFT70B) from Bos taurus (Bovine).